The chain runs to 677 residues: DNA ligase (677 aa).

NAD(+) is bound by residues 34–38 (DLAFD), 83–84 (SL), and Glu115. Lys117 serves as the catalytic N6-AMP-lysine intermediate. NAD(+) contacts are provided by Arg138, Glu180, Lys297, and Lys321. Residues Cys416, Cys419, Cys434, and Cys439 each coordinate Zn(2+). One can recognise a BRCT domain in the interval 596–677 (KKTSQLAGLT…LIKMLETEQA (82 aa)).

The protein belongs to the NAD-dependent DNA ligase family. LigA subfamily. Mg(2+) serves as cofactor. Mn(2+) is required as a cofactor.

The enzyme catalyses NAD(+) + (deoxyribonucleotide)n-3'-hydroxyl + 5'-phospho-(deoxyribonucleotide)m = (deoxyribonucleotide)n+m + AMP + beta-nicotinamide D-nucleotide.. Functionally, DNA ligase that catalyzes the formation of phosphodiester linkages between 5'-phosphoryl and 3'-hydroxyl groups in double-stranded DNA using NAD as a coenzyme and as the energy source for the reaction. It is essential for DNA replication and repair of damaged DNA. The polypeptide is DNA ligase (Acidobacterium capsulatum (strain ATCC 51196 / DSM 11244 / BCRC 80197 / JCM 7670 / NBRC 15755 / NCIMB 13165 / 161)).